We begin with the raw amino-acid sequence, 864 residues long: Bifunctional uridylyltransferase/uridylyl-removing enzyme (864 aa).

The segment at 1 to 328 (MLFPYFPLSE…QTNEPVQVRL (328 aa)) is uridylyltransferase. A uridylyl-removing region spans residues 329 to 686 (LDKEFQCVNN…ISNRFSEGGT (358 aa)). Residues 446-562 (VDEHIVRTLL…LHFAEAVQNN (117 aa)) form the HD domain. 2 consecutive ACT domains span residues 687-766 (EIFV…TFRA) and 793-864 (EMEL…LEPK).

Belongs to the GlnD family. Mg(2+) is required as a cofactor.

It catalyses the reaction [protein-PII]-L-tyrosine + UTP = [protein-PII]-uridylyl-L-tyrosine + diphosphate. The catalysed reaction is [protein-PII]-uridylyl-L-tyrosine + H2O = [protein-PII]-L-tyrosine + UMP + H(+). Its activity is regulated as follows. Uridylyltransferase (UTase) activity is inhibited by glutamine, while glutamine activates uridylyl-removing (UR) activity. Functionally, modifies, by uridylylation and deuridylylation, the PII regulatory proteins (GlnB and homologs), in response to the nitrogen status of the cell that GlnD senses through the glutamine level. Under low glutamine levels, catalyzes the conversion of the PII proteins and UTP to PII-UMP and PPi, while under higher glutamine levels, GlnD hydrolyzes PII-UMP to PII and UMP (deuridylylation). Thus, controls uridylylation state and activity of the PII proteins, and plays an important role in the regulation of nitrogen assimilation and metabolism. This is Bifunctional uridylyltransferase/uridylyl-removing enzyme from Pasteurella multocida (strain Pm70).